Reading from the N-terminus, the 698-residue chain is Vertnin (698 aa).

It belongs to the vertnin family.

It is found in the nucleus. Its function is as follows. Acts as a transcription factor that regulates development of thoracic vertebrae. This chain is Vertnin (VRTN), found in Sus scrofa (Pig).